Reading from the N-terminus, the 191-residue chain is Stress response regulator protein 1 (191 aa).

Residues 62-181 enclose the Response regulatory domain; it reads SFLLVDDNEI…TNYILQKIEQ (120 aa). Aspartate 114 is modified (4-aspartylphosphate).

Its function is as follows. Required for stress adaptation, morphogenesis and virulence. This chain is Stress response regulator protein 1 (SRR1), found in Clavispora lusitaniae (strain ATCC 42720) (Yeast).